The sequence spans 378 residues: MYKLICKDGNAKRGEFTTVHGKIQTPVFMNVGTAAAIKGAVSTMDLQEIGTQVELSNTYHLHVRPGDEVVKKLGGLHKFMVWDKPILTDSGGFQVFSLAGLRKIKEEGVYFNSHIDGKKIFMGPEESMRIQSNLASTIAMAFDECPPHPATREYMEDSVARTTRWLLRCKNEMNRLNTLEDTINKHQMLFGINQGGTYTDIRVEHAKRISELDLDGYALGGLAVGESHSEMYRIIEETVPYLPEAKPTYLMGVGTPANILEAVERGVDFFDCVYPARNGRHGHAYTNHGKMNLLNAKYELDDRPIEEGCGCPVCKNYSRGYIRHLLKAKEMLGLRFLVTHNLYFYNKMMEEIREAIENQNFASYKKKKLEGFAAEQGN.

The Proton acceptor role is filled by D89. Substrate-binding positions include 89–93 (DSGGF), D143, Q194, and G221. The tract at residues 252–258 (GVGTPAN) is RNA binding. The active-site Nucleophile is D271. Residues 276–280 (ARNGR) form an RNA binding; important for wobble base 34 recognition region. Zn(2+) is bound by residues C309, C311, C314, and H340.

It belongs to the queuine tRNA-ribosyltransferase family. Homodimer. Within each dimer, one monomer is responsible for RNA recognition and catalysis, while the other monomer binds to the replacement base PreQ1. The cofactor is Zn(2+).

It carries out the reaction 7-aminomethyl-7-carbaguanine + guanosine(34) in tRNA = 7-aminomethyl-7-carbaguanosine(34) in tRNA + guanine. It functions in the pathway tRNA modification; tRNA-queuosine biosynthesis. In terms of biological role, catalyzes the base-exchange of a guanine (G) residue with the queuine precursor 7-aminomethyl-7-deazaguanine (PreQ1) at position 34 (anticodon wobble position) in tRNAs with GU(N) anticodons (tRNA-Asp, -Asn, -His and -Tyr). Catalysis occurs through a double-displacement mechanism. The nucleophile active site attacks the C1' of nucleotide 34 to detach the guanine base from the RNA, forming a covalent enzyme-RNA intermediate. The proton acceptor active site deprotonates the incoming PreQ1, allowing a nucleophilic attack on the C1' of the ribose to form the product. After dissociation, two additional enzymatic reactions on the tRNA convert PreQ1 to queuine (Q), resulting in the hypermodified nucleoside queuosine (7-(((4,5-cis-dihydroxy-2-cyclopenten-1-yl)amino)methyl)-7-deazaguanosine). This chain is Queuine tRNA-ribosyltransferase, found in Lachnoclostridium phytofermentans (strain ATCC 700394 / DSM 18823 / ISDg) (Clostridium phytofermentans).